An 87-amino-acid polypeptide reads, in one-letter code: UPF0335 protein Avi_3695 (87 aa).

The protein belongs to the UPF0335 family.

The sequence is that of UPF0335 protein Avi_3695 from Allorhizobium ampelinum (strain ATCC BAA-846 / DSM 112012 / S4) (Agrobacterium vitis (strain S4)).